We begin with the raw amino-acid sequence, 156 residues long: Small ribosomal subunit protein uS7 (156 aa).

Belongs to the universal ribosomal protein uS7 family. In terms of assembly, part of the 30S ribosomal subunit. Contacts proteins S9 and S11.

One of the primary rRNA binding proteins, it binds directly to 16S rRNA where it nucleates assembly of the head domain of the 30S subunit. Is located at the subunit interface close to the decoding center, probably blocks exit of the E-site tRNA. In Bartonella henselae (strain ATCC 49882 / DSM 28221 / CCUG 30454 / Houston 1) (Rochalimaea henselae), this protein is Small ribosomal subunit protein uS7.